Here is a 504-residue protein sequence, read N- to C-terminus: Fibroblast growth factor receptor-like 1 (504 aa).

Residues 1–24 (MTPSPLLLLLLPPLLLGAFPPAAA) form the signal peptide. Topologically, residues 25–378 (ARGPPKMADK…SSSATSLPWP (354 aa)) are extracellular. The region spanning 29 to 115 (PKMADKVVPR…GSLSVNYTLV (87 aa)) is the Ig-like C2-type 1 domain. Cys51 and Cys99 are joined by a disulfide. N-linked (GlcNAc...) asparagine glycosylation occurs at Asn111. A disordered region spans residues 123–155 (GKESLGPDSSSGGQEDPASQQWARPRFTQPSKM). Positions 129 to 144 (PDSSSGGQEDPASQQW) are enriched in polar residues. 2 consecutive Ig-like C2-type domains span residues 147-237 (PRFT…YKVD) and 246-354 (PVLT…AFLT). A disulfide bridge connects residues Cys172 and Cys221. N-linked (GlcNAc...) asparagine glycosylation is found at Asn231, Asn255, and Asn293. Cysteines 268 and 338 form a disulfide. A helical membrane pass occupies residues 379 to 399 (VVIGIPAGAVFILGTLLLWLC). The Cytoplasmic segment spans residues 400 to 504 (QAQKKPCTPA…KVHQHIHYQC (105 aa)). Positions 407-418 (TPAPAPPLPGHR) are enriched in pro residues. Positions 407-435 (TPAPAPPLPGHRPPGTARDRSGDKDLPSL) are disordered. Positions 423 to 432 (ARDRSGDKDL) are enriched in basic and acidic residues.

Interacts with FGF2 with a low affinity. In terms of tissue distribution, expressed preferentially in cartilaginous tissues and pancreas. Highly expressed in the liver, kidney, heart, brain and skeletal muscle. Weakly expressed in the lung, small intestine and spleen.

Its subcellular location is the membrane. In terms of biological role, has a negative effect on cell proliferation. In Homo sapiens (Human), this protein is Fibroblast growth factor receptor-like 1 (FGFRL1).